The sequence spans 563 residues: Arginine--tRNA ligase (563 aa).

Residues P121 to H131 carry the 'HIGH' region motif.

This sequence belongs to the class-I aminoacyl-tRNA synthetase family. In terms of assembly, monomer.

The protein resides in the cytoplasm. It catalyses the reaction tRNA(Arg) + L-arginine + ATP = L-arginyl-tRNA(Arg) + AMP + diphosphate. The chain is Arginine--tRNA ligase from Streptococcus pyogenes serotype M12 (strain MGAS2096).